Here is a 294-residue protein sequence, read N- to C-terminus: 4-hydroxy-tetrahydrodipicolinate synthase (294 aa).

A pyruvate-binding site is contributed by threonine 47. Catalysis depends on tyrosine 135, which acts as the Proton donor/acceptor. The Schiff-base intermediate with substrate role is filled by lysine 163. A pyruvate-binding site is contributed by valine 205.

Belongs to the DapA family. In terms of assembly, homotetramer; dimer of dimers.

It is found in the cytoplasm. The enzyme catalyses L-aspartate 4-semialdehyde + pyruvate = (2S,4S)-4-hydroxy-2,3,4,5-tetrahydrodipicolinate + H2O + H(+). Its pathway is amino-acid biosynthesis; L-lysine biosynthesis via DAP pathway; (S)-tetrahydrodipicolinate from L-aspartate: step 3/4. Functionally, catalyzes the condensation of (S)-aspartate-beta-semialdehyde [(S)-ASA] and pyruvate to 4-hydroxy-tetrahydrodipicolinate (HTPA). The polypeptide is 4-hydroxy-tetrahydrodipicolinate synthase (Rickettsia canadensis (strain McKiel)).